The following is a 58-amino-acid chain: Light-harvesting protein B-875 alpha chain (58 aa).

Residues 1–15 are Cytoplasmic-facing; the sequence is MSKFYKIWMIFDPRR. Residues 16 to 36 traverse the membrane as a helical segment; it reads VFVAQGVFLFLLAVMIHLILL. Histidine 32 lines the a bacteriochlorophyll pocket. The Periplasmic segment spans residues 37–58; sequence STPSYNWLEISAAKYNRVAVAE.

This sequence belongs to the antenna complex alpha subunit family. As to quaternary structure, the core complex is formed by different alpha and beta chains, binding bacteriochlorophyll molecules, and arranged most probably in tetrameric structures disposed around the reaction center. The non-pigmented gamma chains may constitute additional components.

It localises to the cell inner membrane. Functionally, antenna complexes are light-harvesting systems, which transfer the excitation energy to the reaction centers. This chain is Light-harvesting protein B-875 alpha chain (pufA), found in Cereibacter sphaeroides (strain ATCC 17023 / DSM 158 / JCM 6121 / CCUG 31486 / LMG 2827 / NBRC 12203 / NCIMB 8253 / ATH 2.4.1.) (Rhodobacter sphaeroides).